Reading from the N-terminus, the 366-residue chain is Growth hormone secretagogue receptor type 1 (366 aa).

Residues M1–A40 are Extracellular-facing. N3, N13, and N27 each carry an N-linked (GlcNAc...) asparagine glycan. The helical transmembrane segment at P41–L66 threads the bilayer. Over V67 to R72 the chain is Cytoplasmic. Residues E73–M96 traverse the membrane as a helical segment. Residues P97–K117 lie on the Extracellular side of the membrane. An intrachain disulfide couples C116 to C198. Residues L118 to V139 form a helical membrane-spanning segment. Residues E140–L162 are Cytoplasmic-facing. The helical transmembrane segment at V163–G183 threads the bilayer. Residues V184–T211 are Extracellular-facing. N188 carries an N-linked (GlcNAc...) asparagine glycan. The helical transmembrane segment at V212–I235 threads the bilayer. Residues G236–K263 are Cytoplasmic-facing. The chain crosses the membrane as a helical span at residues M264–L285. Residues F286–Q302 lie on the Extracellular side of the membrane. Residues Y303 to M326 form a helical membrane-spanning segment. Over S327–T366 the chain is Cytoplasmic.

Belongs to the G-protein coupled receptor 1 family.

The protein resides in the cell membrane. Functionally, receptor for ghrelin, coupled to G-alpha-11 proteins. Stimulates growth hormone secretion. Also binds other growth hormone releasing peptides (GHRP) (e.g. Met-enkephalin and GHRP-6) as well as non-peptide, low molecular weight secretagogues (e.g. L-692,429, MK-0677, adenosine). This is Growth hormone secretagogue receptor type 1 (GHSR) from Mustela putorius furo (European domestic ferret).